A 528-amino-acid chain; its full sequence is uncharacterized protein (528 aa).

Basic residues-rich tracts occupy residues 1-16 (MGKASKATKKFTKNHL) and 25-43 (QLARSKKVYGTKNRNSHTK). Residues 1 to 59 (MGKASKATKKFTKNHLKNTIERRKQLARSKKVYGTKNRNSHTKNKLESGTNDNNKNKED) are disordered.

It belongs to the NOC2 family.

The protein resides in the nucleus. It is found in the nucleolus. This is an uncharacterized protein from Schizosaccharomyces pombe (strain 972 / ATCC 24843) (Fission yeast).